A 240-amino-acid chain; its full sequence is Cysteine-rich venom protein catrin (240 aa).

Residues 1–19 form the signal peptide; that stretch reads MIAFIVLPILAAVLQQSSG. The region spanning 38–166 is the SCP domain; sequence VDLHNFLRRS…KYSYFYVCQY (129 aa). Intrachain disulfides connect Cys75-Cys153, Cys92-Cys167, Cys148-Cys164, Cys186-Cys193, Cys189-Cys198, Cys202-Cys235, Cys211-Cys229, and Cys220-Cys233. The ShKT domain maps to 202–235; it reads CTKEDKYTNCKSLVQQAGCQDKQMQSDCPAICFC.

Belongs to the CRISP family. Expressed by the venom gland.

It localises to the secreted. In terms of biological role, catrin-2 weakly blocks contraction of smooth muscle elicited by high potassium-induced depolarization, but does not block caffeine-stimulated contraction. Catrin-1 has no significant effect. May target voltage-gated calcium channels on smooth muscle. The polypeptide is Cysteine-rich venom protein catrin (Crotalus atrox (Western diamondback rattlesnake)).